Reading from the N-terminus, the 359-residue chain is MKIAFIGEAVSGFGGMETVIRDVITTFRQQHIQSEMFFFCRNDKMDKGWLEGIKYSCSFSNIRLGFLRRAKHIHALSKWLQEYQPDIVICIDVISCLFAAKARKKSGIDMPVFSWPHFSLDHKKHAEYITCADYHLAISSGIKQQMINRGVAESTINVIFNPVETKDSVIPAPEEGETATFIYVGRMKFEGQKRVKDLLDGLSQAKGNWKLHVLGDGSDFEKCQAYGRELNIDDRIVWYGWQQYPWELVQQDIEKVSALLLTSSFEGFPMTLLEALSWGIPCISADCVSGPADIIQPDVNGHLYQPGDIAGFVTLLNKYIAGEIHIEHEKIPASIDEFYQSKYYDRLHKVIISAISRRK.

UDP contacts are provided by glutamine 242 and glutamate 274.

It belongs to the glycosyltransferase group 1 family. Glycosyltransferase 4 subfamily.

It carries out the reaction alpha-D-Glc-(1-&gt;3)-[L-alpha-D-Hep-(1-&gt;7)]-4-O-PO3(2-)-L-alpha-D-Hep-(1-&gt;3)-4-O-PO3(2-)-L-alpha-D-Hep-(1-&gt;5)-[alpha-Kdo-(2-&gt;4)]-alpha-Kdo-(2-&gt;6)-lipid A + UDP-alpha-D-galactose = alpha-D-Gal-(1-&gt;6)-alpha-D-Glc-(1-&gt;3)-[L-alpha-D-Hep-(1-&gt;7)]-4-O-PO3(2-)-L-alpha-D-Hep-(1-&gt;3)-4-O-PO3(2-)-L-alpha-D-Hep-(1-&gt;5)-[alpha-Kdo-(2-&gt;4)]-alpha-Kdo-(2-&gt;6)-lipid A + UDP + H(+). Its pathway is bacterial outer membrane biogenesis; LPS core biosynthesis. Galactosyltransferase involved in the biosynthesis of the core oligosaccharide region of lipopolysaccharide (LPS). Catalyzes the addition of galactose from UDP-galactose to the first glucose residue of the LPS outer core. Cannot use other sugar donors, such as UDP-glucose, UDP-glucuronic acid, UDP-galacuronic acid, GDP-mannose, ADP-glucose and GDP-glucose. In the absence of a lipid acceptor, can hydrolyze UDP-galactose to UDP and galactose. This chain is Lipopolysaccharide 1,6-galactosyltransferase, found in Escherichia coli (strain K12).